Here is a 415-residue protein sequence, read N- to C-terminus: Gamma-glutamyl phosphate reductase (415 aa).

The protein belongs to the gamma-glutamyl phosphate reductase family.

The protein localises to the cytoplasm. The catalysed reaction is L-glutamate 5-semialdehyde + phosphate + NADP(+) = L-glutamyl 5-phosphate + NADPH + H(+). Its pathway is amino-acid biosynthesis; L-proline biosynthesis; L-glutamate 5-semialdehyde from L-glutamate: step 2/2. In terms of biological role, catalyzes the NADPH-dependent reduction of L-glutamate 5-phosphate into L-glutamate 5-semialdehyde and phosphate. The product spontaneously undergoes cyclization to form 1-pyrroline-5-carboxylate. The polypeptide is Gamma-glutamyl phosphate reductase (Listeria monocytogenes serovar 1/2a (strain ATCC BAA-679 / EGD-e)).